Here is a 490-residue protein sequence, read N- to C-terminus: Cheilanthifoline synthase (490 aa).

Residues 2 to 22 form a helical membrane-spanning segment; sequence EESLWVVTATVVVVFAIAKLL. Residue Cys-432 coordinates heme.

It belongs to the cytochrome P450 family. It depends on heme as a cofactor. As to expression, expressed in roots. Detected in leaves and stems.

The protein localises to the endoplasmic reticulum membrane. The catalysed reaction is (S)-scoulerine + reduced [NADPH--hemoprotein reductase] + O2 = (S)-cheilanthifoline + oxidized [NADPH--hemoprotein reductase] + 2 H2O + H(+). The protein operates within alkaloid biosynthesis. Methylenedioxy bridge-forming cytochrome P450 involved in the biosynthesis of isoquinoline alkaloids. Converts (S)-scoulerine into (R,S)-cheilanthifoline. Catalyzes an oxidative reaction that does not incorporate oxygen into the product. The polypeptide is Cheilanthifoline synthase (CYP719A5) (Eschscholzia californica (California poppy)).